The following is a 156-amino-acid chain: Small ribosomal subunit protein uS7 (156 aa).

The protein belongs to the universal ribosomal protein uS7 family. Part of the 30S ribosomal subunit. Contacts proteins S9 and S11.

In terms of biological role, one of the primary rRNA binding proteins, it binds directly to 16S rRNA where it nucleates assembly of the head domain of the 30S subunit. Is located at the subunit interface close to the decoding center, probably blocks exit of the E-site tRNA. The protein is Small ribosomal subunit protein uS7 of Bacillus velezensis (strain DSM 23117 / BGSC 10A6 / LMG 26770 / FZB42) (Bacillus amyloliquefaciens subsp. plantarum).